A 275-amino-acid polypeptide reads, in one-letter code: Large ribosomal subunit protein uL2cz/uL2cy (275 aa).

2 disordered regions span residues 1–26 (MAIH…VKSN) and 224–275 (MNPV…RRTK). Over residues 7 to 26 (KTSTPSTRNGTVDSRQVKSN) the composition is skewed to polar residues.

The protein belongs to the universal ribosomal protein uL2 family. As to quaternary structure, part of the 50S ribosomal subunit.

The protein resides in the plastid. Its subcellular location is the chloroplast. The polypeptide is Large ribosomal subunit protein uL2cz/uL2cy (rpl2-A) (Phaseolus angularis (Azuki bean)).